We begin with the raw amino-acid sequence, 60 residues long: Large ribosomal subunit protein uL30 (60 aa).

This sequence belongs to the universal ribosomal protein uL30 family. As to quaternary structure, part of the 50S ribosomal subunit.

The chain is Large ribosomal subunit protein uL30 from Levilactobacillus brevis (strain ATCC 367 / BCRC 12310 / CIP 105137 / JCM 1170 / LMG 11437 / NCIMB 947 / NCTC 947) (Lactobacillus brevis).